The sequence spans 465 residues: Chromosomal replication initiator protein DnaA (465 aa).

The interval 1 to 84 is domain I, interacts with DnaA modulators; it reads MSLSLWQQCL…RFEVGSKPLV (84 aa). The segment at 84–128 is domain II; that stretch reads VQTISQPAQSHHNPVSVARQQPVRMAPVRPSWDNSPVQAEHTYRS. Positions 129–345 are domain III, AAA+ region; sequence NVNPKHTFDN…GALNRVIANA (217 aa). 4 residues coordinate ATP: G173, G175, K176, and T177. A domain IV, binds dsDNA region spans residues 346–465; it reads NFTGRSITID…FSNLIRTLSS (120 aa).

This sequence belongs to the DnaA family. Oligomerizes as a right-handed, spiral filament on DNA at oriC.

Its subcellular location is the cytoplasm. In terms of biological role, plays an essential role in the initiation and regulation of chromosomal replication. ATP-DnaA binds to the origin of replication (oriC) to initiate formation of the DNA replication initiation complex once per cell cycle. Binds the DnaA box (a 9 base pair repeat at the origin) and separates the double-stranded (ds)DNA. Forms a right-handed helical filament on oriC DNA; dsDNA binds to the exterior of the filament while single-stranded (ss)DNA is stabiized in the filament's interior. The ATP-DnaA-oriC complex binds and stabilizes one strand of the AT-rich DNA unwinding element (DUE), permitting loading of DNA polymerase. After initiation quickly degrades to an ADP-DnaA complex that is not apt for DNA replication. Binds acidic phospholipids. This Pectobacterium atrosepticum (strain SCRI 1043 / ATCC BAA-672) (Erwinia carotovora subsp. atroseptica) protein is Chromosomal replication initiator protein DnaA.